The sequence spans 556 residues: Putative protein SPATA31F2P (556 aa).

Disordered regions lie at residues 133-154 (ALKA…SGSD) and 210-231 (LPKT…WVSP). Polar residues predominate over residues 144-154 (SGGQDNDSGSD).

The protein belongs to the SPATA31 family.

The protein is Putative protein SPATA31F2P of Homo sapiens (Human).